The primary structure comprises 443 residues: Signal recognition particle 54 kDa protein (443 aa).

GTP is bound by residues 107–114, 189–193, and 247–250; these read GIQGSGKT, DTAGR, and TKLD.

The protein belongs to the GTP-binding SRP family. SRP54 subfamily. In terms of assembly, part of the signal recognition particle protein translocation system, which is composed of SRP and FtsY. Archaeal SRP consists of a 7S RNA molecule of 300 nucleotides and two protein subunits: SRP54 and SRP19.

The protein resides in the cytoplasm. The catalysed reaction is GTP + H2O = GDP + phosphate + H(+). In terms of biological role, involved in targeting and insertion of nascent membrane proteins into the cytoplasmic membrane. Binds to the hydrophobic signal sequence of the ribosome-nascent chain (RNC) as it emerges from the ribosomes. The SRP-RNC complex is then targeted to the cytoplasmic membrane where it interacts with the SRP receptor FtsY. This is Signal recognition particle 54 kDa protein from Pyrococcus furiosus (strain ATCC 43587 / DSM 3638 / JCM 8422 / Vc1).